The chain runs to 264 residues: Zearalenone hydrolase (264 aa).

In terms of domain architecture, AB hydrolase-1 spans Val-27–Pro-207. Gly-32, Ser-102, and Ser-103 together coordinate zearalenone. Ser-102 is a catalytic residue. Glu-126 is a catalytic residue. Zearalenone contacts are provided by Trp-183, Tyr-187, Ser-220, and His-242. The active site involves His-242.

This sequence belongs to the AB hydrolase superfamily. Hydrolase RutD family. As to quaternary structure, homodimer.

It catalyses the reaction zearalenone + H2O = hydrolyzed zearalenone + H(+). Lactonohydrolase that specifically hydrolyzes and deactivates the mycotoxin zearalenone (ZEN) and its zearalenol (ZOL) derivatives. ZHD101 prefers ZEN to ZOL as its substrate, but ZOL, especially the alpha-form, shows higher estrogenic toxicity than ZEN. The polypeptide is Zearalenone hydrolase (Bionectria ochroleuca (Gliocladium roseum)).